Reading from the N-terminus, the 152-residue chain is Transcription factor XE1.1 (152 aa).

2 disordered regions span residues 1 to 54 (RDDF…ANNA) and 123 to 152 (KVSAVSAEPPNTHPGVHPGLTDTTNPMGHM). Basic and acidic residues-rich tracts occupy residues 7 to 22 (DDMKSDDESSQKEMKS) and 38 to 54 (PEQKVEREKERRMANNA). Positions 47–100 (ERRMANNARERLRVRDINEAFKELGRMCQLHLKSEKPQTKLLILHQAVAVILNL) constitute a bHLH domain. A class A specific domain region spans residues 102 to 125 (QQVRERNLNPKAACLKRREEEKVS). The span at 143-152 (TDTTNPMGHM) shows a compositional bias: polar residues.

In terms of assembly, efficient DNA binding requires dimerization with another bHLH protein. Forms homo- or heterooligomers with myogenin, E12 and ITF2 proteins.

It is found in the nucleus. Functionally, transcriptional regulator. Involved in the initiation of neuronal differentiation. Activates transcription by binding to the E box-containing promoter. The sequence is that of Transcription factor XE1.1 from Xenopus laevis (African clawed frog).